Reading from the N-terminus, the 103-residue chain is Cell division suppressor protein YneA (103 aa).

The region spanning 36 to 87 is the LysM domain; sequence VKIEVQEGDTLWELADRIKGGKTADKHKFIEWVADKNNLPTSVIKPGDVLIL.

The protein belongs to the YneA family.

It localises to the cytoplasm. Its function is as follows. Inhibits cell division during the SOS response. Affects a later stage of the cell division protein assembly, after the assembly of the Z ring, by probably suppressing recruitment of FtsL and/or DivIC to the division machinery. This Bacillus licheniformis (strain ATCC 14580 / DSM 13 / JCM 2505 / CCUG 7422 / NBRC 12200 / NCIMB 9375 / NCTC 10341 / NRRL NRS-1264 / Gibson 46) protein is Cell division suppressor protein YneA.